A 1116-amino-acid polypeptide reads, in one-letter code: DUB-associated factor 1 (1116 aa).

WD repeat units follow at residues 21–62, 91–132, 160–200, 219–262, 266–305, 387–426, and 428–466; these read AHIL…NEPE, KNSD…DHDD, VHDG…EKMA, SMSP…EVIR, AHRT…DQTT, KKYG…FSVN, and GGFA…LLNT. The segment at 578 to 600 is disordered; that stretch reads LDTGYNSESKKNNKDKKRKSTFK. Position 668 is a phosphoserine (S668). A Phosphothreonine modification is found at T693. The segment covering 747 to 776 has biased composition (polar residues); that stretch reads ISSQDLPSNNTHNKLRSSENSRANSTSTLE. Disordered regions lie at residues 747 to 784 and 963 to 994; these read ISSQ…KKPE and FISA…PSTQ. Residues 967 to 987 show a composition bias toward low complexity; it reads SDTTESSGNDSSDSSLGNGNE.

As to quaternary structure, interacts (via its WD repeats) with ubiquitin.

The protein localises to the cytoplasm. Ubiquitin-binding protein involved in the resistance to phenanthroline, sanguinarine, nordihydroguaiaretic acid (NDGA), isopropyl (N-3-chloro-phenyl)-carbamate (IPCPC) and guanosine 5'-O-(2-thiodiphosphate). The sequence is that of DUB-associated factor 1 from Saccharomyces cerevisiae (strain ATCC 204508 / S288c) (Baker's yeast).